The chain runs to 916 residues: Major intrinsically disordered Notch2-binding receptor 1 (916 aa).

At 1–891 (METSQETSLF…AEFRRAKVCK (891 aa)) the chain is on the cytoplasmic side. Disordered regions lie at residues 390–409 (EEKL…PAPE), 553–591 (KSDC…SEEE), 648–675 (SLTS…GPKL), 705–726 (TRPS…IASI), and 745–782 (NEEE…LPKQ). 2 stretches are compositionally biased toward basic and acidic residues: residues 553 to 564 (KSDCDSSPEHNL) and 575 to 591 (KGDK…SEEE). The residue at position 711 (Ser711) is a Phosphoserine. A compositionally biased stretch (basic and acidic residues) spans 750–771 (KDTGPGDNKDWHRKSKEADRQY). Residues 892–912 (IAALIAAAACTVILVIVVPIC) traverse the membrane as a helical segment. The Extracellular segment spans residues 913 to 916 (TMKS).

The protein belongs to the MINAR family. In terms of assembly, interacts with NOTCH2; this interaction increases MINAR1 stability. Interacts (via N-terminus) with DEPTOR (via PDZ domain); this interaction may stabilize DEPTOR protein by impairing its ubiquitination. Widely expressed, including in breast epithelial cells and endothelial cells (at protein level). Expression is down-regulated in advanced breast tumors (at protein level).

It localises to the cell membrane. Functionally, intrinsically disordered protein which may negatively regulate mTOR signaling pathway by stabilizing the mTOR complex component DEPTOR. Negatively regulates angiogenesis. Negatively regulates cell growth. Negatively regulates neurite outgrowth in hippocampal neurons. The chain is Major intrinsically disordered Notch2-binding receptor 1 from Homo sapiens (Human).